The sequence spans 219 residues: Cytidylate kinase (219 aa).

10-18 (GPAAAGKST) is an ATP binding site.

It belongs to the cytidylate kinase family. Type 1 subfamily.

The protein resides in the cytoplasm. It catalyses the reaction CMP + ATP = CDP + ADP. The enzyme catalyses dCMP + ATP = dCDP + ADP. This chain is Cytidylate kinase, found in Staphylococcus aureus (strain MRSA252).